A 510-amino-acid chain; its full sequence is MTPVVALVGRPNVGKSTLFNRLTRTRDALVADFPGLTRDRKYGHANIAGHDFIVIDTGGIDGTEEGIEEKMAEQSLLAIEEADVVLFLVDARAGLLPADIGIAQYLRQREKTTVVVANKTDGIDADSHCGEFYQLGLGEVAKIAAAQGRGVTQLIEQVLSPLATALNSEQADENEENLATETNEFDEWNQDFDFNNEEDTALLDEALDEENSESIADKNIKIAIIGRPNVGKSTLTNRILGEERVVVYDMPGTTRDSIYIPMERDGQEYTIIDTAGVRKRGKINLAVEKFSVIKTLQAIQDANVVLLTIDAREGISDQDLSLLGFILNAGRSLVIVVNKWDGLSYDIKEQVKSELDRRLDFIDFARVHFISALHGSGVGNLFDSVKEAYACATQKTSTSMLTRILHMAADEHQPPLVNGRRVKLKYAHPGGYNPPIIVIHGNQVEKLSDAYKRYLSNYFRKSLKIIGSPIRIQFQEGNNPFAGKKNKLTPNQLRKRKRLMKFIKKTKNKK.

EngA-type G domains follow at residues 3–166 (PVVA…ATAL) and 220–393 (IKIA…ACAT). GTP-binding positions include 9 to 16 (GRPNVGKS), 56 to 60 (DTGGI), 118 to 121 (NKTD), 226 to 233 (GRPNVGKS), 273 to 277 (DTAGV), and 338 to 341 (NKWD). Residues 394–478 (QKTSTSMLTR…PIRIQFQEGN (85 aa)) form the KH-like domain.

This sequence belongs to the TRAFAC class TrmE-Era-EngA-EngB-Septin-like GTPase superfamily. EngA (Der) GTPase family. Associates with the 50S ribosomal subunit.

Its function is as follows. GTPase that plays an essential role in the late steps of ribosome biogenesis. The protein is GTPase Der of Haemophilus ducreyi (strain 35000HP / ATCC 700724).